We begin with the raw amino-acid sequence, 207 residues long: Metalloproteinase inhibitor 1 (207 aa).

Positions 1-23 (MAPLAALASSMLLLLWLVAPSRA) are cleaved as a signal peptide. Residue Cys24 participates in Zn(2+) binding. Residues 24-27 (CTCV) are involved in metalloproteinase-binding. Disulfide bonds link Cys24–Cys93, Cys26–Cys122, Cys36–Cys147, Cys150–Cys197, Cys155–Cys160, and Cys168–Cys189. One can recognise an NTR domain in the interval 24-147 (CTCVPPHPQT…GFTKTYAAGC (124 aa)). Asn53 is a glycosylation site (N-linked (GlcNAc...) asparagine). An involved in metalloproteinase-binding region spans residues 90 to 91 (ES). Asn101 carries N-linked (GlcNAc...) asparagine glycosylation. Ser178 carries the phosphoserine modification.

The protein belongs to the protease inhibitor I35 (TIMP) family. Interacts with MMP1, MMP3, MMP10 and MMP13, but has only very low affinity for MMP14. Interacts with CD63; identified in a complex with CD63 and ITGB1. Post-translationally, the activity of TIMP1 is dependent on the presence of disulfide bonds. In terms of processing, N-glycosylated.

The protein localises to the secreted. Metalloproteinase inhibitor that functions by forming one to one complexes with target metalloproteinases, such as collagenases, and irreversibly inactivates them by binding to their catalytic zinc cofactor. Acts on MMP1, MMP2, MMP3, MMP7, MMP8, MMP9, MMP10, MMP11, MMP12, MMP13 and MMP16. Does not act on MMP14. Also functions as a growth factor that regulates cell differentiation, migration and cell death and activates cellular signaling cascades via CD63 and ITGB1. Plays a role in integrin signaling. The polypeptide is Metalloproteinase inhibitor 1 (TIMP1) (Oryctolagus cuniculus (Rabbit)).